Consider the following 395-residue polypeptide: Flagellin B (395 aa).

The protein belongs to the bacterial flagellin family.

The protein localises to the secreted. Its subcellular location is the bacterial flagellum. In terms of biological role, flagellin is the subunit protein which polymerizes to form the filaments of bacterial flagella. The protein is Flagellin B (flaB) of Rhizobium meliloti (Ensifer meliloti).